We begin with the raw amino-acid sequence, 461 residues long: Protein ultraspiracle homolog (461 aa).

A modulating region spans residues 1-112 (MSSVAKKDKR…NHPLSGSKHL (112 aa)). A disordered region spans residues 26 to 51 (PAPHQQQSMPSSQPSNFLQPLATPST). Over residues 27 to 40 (APHQQQSMPSSQPS) the composition is skewed to low complexity. The segment covering 41 to 51 (NFLQPLATPST) has biased composition (polar residues). NR C4-type zinc fingers lie at residues 113–133 (CSIC…CEGC) and 149–173 (CRED…YQKC). A DNA-binding region (nuclear receptor) is located at residues 113-185 (CSICGDRASG…CGMKREAVQE (73 aa)). The hinge stretch occupies residues 185–192 (EERQRAAR). One can recognise an NR LBD domain in the interval 203–452 (VQELSIERLL…SYIHDALRNH (250 aa)).

This sequence belongs to the nuclear hormone receptor family. NR2 subfamily. In terms of assembly, heterodimer of USP and ECR. Only the heterodimer is capable of high-affinity binding to ecdysone.

The protein localises to the nucleus. Its function is as follows. Receptor for ecdysone. May be an important modulator of insect metamorphosis. The chain is Protein ultraspiracle homolog (USP) from Manduca sexta (Tobacco hawkmoth).